Here is a 270-residue protein sequence, read N- to C-terminus: MRRNCCHVSFASTLKILNFVQAFIGVSIIIYSIWMLHEYSRHLPVDPPPSASSSSGTEIATSVSEPLKNPIDFVASIILGSNGGDHGFNLRSLDLPAPWFIYSFMAVGILVCIVTFIGFIAAEAINGCCLCFYSILKTLLILLEAALVAYIAIDRHWEKDLPYDPTGELSSLRAFIEENIDICKWVGIAVVAVQLLSLLLAMVLRAMVSTPKPELDEEEDDENPRSRTWDPLLGPQGNQAPAGSSKIENWSSRIREKYGLNQSPPVNPKG.

The Cytoplasmic segment spans residues methionine 1 to lysine 15. A helical transmembrane segment spans residues isoleucine 16–leucine 36. Over histidine 37 to tryptophan 99 the chain is Extracellular. The chain crosses the membrane as a helical span at residues phenylalanine 100–isoleucine 120. At alanine 121 to phenylalanine 132 the chain is on the cytoplasmic side. A helical transmembrane segment spans residues tyrosine 133 to isoleucine 153. Residues aspartate 154–cysteine 183 are Extracellular-facing. A helical membrane pass occupies residues lysine 184–leucine 204. At arginine 205 to glycine 270 the chain is on the cytoplasmic side. Positions lysine 212–asparagine 249 are disordered. Over residues glutamine 236–asparagine 249 the composition is skewed to polar residues. Residue serine 245 is modified to Phosphoserine.

It belongs to the tetraspanin (TM4SF) family. In terms of assembly, homodimer. Constituent of tobamovirus replication complex. Expressed in rosette leaves.

Its subcellular location is the membrane. The protein resides in the vacuole membrane. Functionally, may be involved in the regulation of cell differentiation. Promotes intracellular multiplication of tobamoviruses, probably being a component of the replication complex. The sequence is that of Tetraspanin-18 (TOM2AH2) from Arabidopsis thaliana (Mouse-ear cress).